Reading from the N-terminus, the 512-residue chain is Probable cytochrome P450 6d2 (512 aa).

Cys-457 provides a ligand contact to heme.

It belongs to the cytochrome P450 family. The cofactor is heme.

It is found in the endoplasmic reticulum membrane. The protein localises to the microsome membrane. Functionally, may be involved in the metabolism of insect hormones and in the breakdown of synthetic insecticides. In Drosophila melanogaster (Fruit fly), this protein is Probable cytochrome P450 6d2 (Cyp6d2).